The primary structure comprises 1277 residues: DNA repair protein RAD5B (1277 aa).

The interval 271 to 293 is disordered; that stretch reads KLEQENDDLFSSGDSDGTSAKRR. The Helicase ATP-binding domain maps to 674 to 871; sequence PTATQMARGG…YSLLCFLHVE (198 aa). Residue 687–694 participates in ATP binding; that stretch reads DAMGLGKT. Positions 822 to 825 match the DEAH box motif; sequence DEAH. The segment at 1040–1080 adopts an RING-type zinc-finger fold; it reads CPICLESADDPVLTPCAHRMCRECLLTSWRSPSCGLCPICR. A Helicase C-terminal domain is found at 1113–1277; sequence ELLKCLEKIK…RLEELKMLFR (165 aa).

Belongs to the SNF2/RAD54 helicase family. RAD16 subfamily.

The protein localises to the nucleus. Possesses intrinsic ATP-dependent nucleosome-remodeling activity. This activity may be required for DNA repair. Does not seem to be required for DNA repair and regulation of homologous recombination (HR). The polypeptide is DNA repair protein RAD5B (Arabidopsis thaliana (Mouse-ear cress)).